Reading from the N-terminus, the 93-residue chain is uncharacterized protein (93 aa).

It belongs to the BolA/IbaG family.

This is an uncharacterized protein from Sinorhizobium sp.